A 344-amino-acid polypeptide reads, in one-letter code: uncharacterized protein (344 aa).

A run of 6 helical transmembrane segments spans residues 155–175 (IARI…IFLV), 181–201 (WGLG…AYGW), 221–241 (LSFI…VNGF), 254–274 (ISSF…FALL), 291–311 (FTII…AAYV), and 319–339 (ALQN…IGVF).

The protein to M.jannaschii MJ1032.

The protein localises to the cell membrane. This is an uncharacterized protein from Archaeoglobus fulgidus (strain ATCC 49558 / DSM 4304 / JCM 9628 / NBRC 100126 / VC-16).